Here is a 299-residue protein sequence, read N- to C-terminus: Oxygen-dependent coproporphyrinogen-III oxidase (299 aa).

S92 lines the substrate pocket. Positions 96 and 106 each coordinate a divalent metal cation. H106 functions as the Proton donor in the catalytic mechanism. 108 to 110 is a binding site for substrate; that stretch reads NVR. Residues H145 and H175 each coordinate a divalent metal cation. Residues 239 to 274 are important for dimerization; that stretch reads YVEFNLVYDRGTLFGLQSGGRAESILMSLPPRVRWE. Residue 257 to 259 coordinates substrate; sequence GGR.

Belongs to the aerobic coproporphyrinogen-III oxidase family. As to quaternary structure, homodimer. A divalent metal cation serves as cofactor.

It localises to the cytoplasm. It catalyses the reaction coproporphyrinogen III + O2 + 2 H(+) = protoporphyrinogen IX + 2 CO2 + 2 H2O. It functions in the pathway porphyrin-containing compound metabolism; protoporphyrin-IX biosynthesis; protoporphyrinogen-IX from coproporphyrinogen-III (O2 route): step 1/1. Involved in the heme biosynthesis. Catalyzes the aerobic oxidative decarboxylation of propionate groups of rings A and B of coproporphyrinogen-III to yield the vinyl groups in protoporphyrinogen-IX. In Xanthomonas axonopodis pv. citri (strain 306), this protein is Oxygen-dependent coproporphyrinogen-III oxidase.